A 1019-amino-acid polypeptide reads, in one-letter code: Macrophage colony-stimulating factor 1 receptor 2 (1019 aa).

Positions 1–18 (MKSYCLLLSITLSCCCSA) are cleaved as a signal peptide. The Extracellular segment spans residues 19–576 (EDLPDPPSIH…LREHNSAFMS (558 aa)). 3 Ig-like C2-type domains span residues 37–109 (QAEA…IHLY), 106–212 (IHLY…LLVA), and 224–312 (QNKA…LIVL). Cysteine 52 and cysteine 92 are disulfide-bonded. Asparagine 96, asparagine 148, asparagine 169, asparagine 249, asparagine 342, asparagine 346, asparagine 355, asparagine 369, asparagine 379, asparagine 408, asparagine 422, asparagine 429, asparagine 433, and asparagine 514 each carry an N-linked (GlcNAc...) asparagine glycan. 2 cysteine pairs are disulfide-bonded: cysteine 139–cysteine 193 and cysteine 239–cysteine 294. Ig-like C2-type domains are found at residues 383–474 (STTV…LRIY) and 487–567 (TLTC…VFHL). Cysteine 490 and cysteine 552 are oxidised to a cystine. The helical transmembrane segment at 577 to 597 (ALIGAGSTAAILFLLLLVVFY) threads the bilayer. The Cytoplasmic portion of the chain corresponds to 598 to 1019 (KWRQKPKYEI…LSVTNIYQLS (422 aa)). The regulatory juxtamembrane domain stretch occupies residues 601–633 (QKPKYEIRWKIIESTEGNHYTFVDPTLLPYNYK). Position 620 is a phosphotyrosine; by autocatalysis (tyrosine 620). In terms of domain architecture, Protein kinase spans 641-963 (LRLGAVLGSG…MICQLIDRLL (323 aa)). ATP-binding positions include 647–655 (LGSGAFGKV) and lysine 674. Tyrosine 756 and tyrosine 778 each carry phosphotyrosine; by autocatalysis. The active-site Proton acceptor is aspartate 827. The segment at 845 to 867 (DFGLARDIQNDDSYIVQGNARLP) is activation loop. A phosphotyrosine; by autocatalysis mark is found at tyrosine 858 and tyrosine 974. The disordered stretch occupies residues 970–1001 (NHQSYSNINETKKDDFKGGKSQRRGEEEEQRR). The span at 979-1001 (ETKKDDFKGGKSQRRGEEEEQRR) shows a compositional bias: basic and acidic residues. Tyrosine 1016 carries the phosphotyrosine; by autocatalysis modification.

This sequence belongs to the protein kinase superfamily. Tyr protein kinase family. CSF-1/PDGF receptor subfamily. In terms of assembly, monomer. Homodimer. Interacts with CSF1. In terms of processing, autophosphorylated in response to CSF1 binding. autophosphorylation, leading to its degradation. Post-translationally, ubiquitinated. Becomes rapidly polyubiquitinated after autophosphorylation, leading to its degradation.

It localises to the cell membrane. The enzyme catalyses L-tyrosyl-[protein] + ATP = O-phospho-L-tyrosyl-[protein] + ADP + H(+). With respect to regulation, present in an inactive conformation in the absence of bound ligand. CSF1 binding leads to dimerization and activation by autophosphorylation on tyrosine residues. Its function is as follows. Tyrosine-protein kinase that acts as a cell-surface receptor for CSF1 and plays an essential role in the regulation of survival, proliferation and differentiation of hematopoietic precursor cells, especially mononuclear phagocytes, such as macrophages and monocytes. Plays an important role in innate immunity and in inflammatory processes. Plays an important role in the regulation of osteoclast proliferation and differentiation, the regulation of bone resorption, and is required for normal bone development. Promotes reorganization of the actin cytoskeleton, regulates formation of membrane ruffles, cell adhesion and cell migration. Activates several signaling pathways in response to ligand binding. This Takifugu rubripes (Japanese pufferfish) protein is Macrophage colony-stimulating factor 1 receptor 2 (csf1r2).